The chain runs to 1143 residues: uncharacterized protein (1143 aa).

A signal peptide spans methionine 1–glycine 20. The Extracellular portion of the chain corresponds to asparagine 21–alanine 1121. Residues asparagine 177–glycine 203 show a composition bias toward gly residues. A disordered region spans residues asparagine 177–serine 1120. Low complexity predominate over residues serine 222–tryptophan 236. Residues serine 237–serine 283 show a composition bias toward gly residues. Residues serine 284–glycine 296 are compositionally biased toward low complexity. The segment covering serine 297–serine 330 has biased composition (gly residues). Over residues serine 331–tryptophan 368 the composition is skewed to low complexity. Gly residues predominate over residues glycine 374 to serine 392. The segment covering serine 393 to glycine 403 has biased composition (low complexity). Gly residues-rich tracts occupy residues glycine 404–serine 418 and glycine 430–serine 444. 2 stretches are compositionally biased toward low complexity: residues serine 445–glycine 498 and glycine 506–aspartate 541. Composition is skewed to gly residues over residues glycine 555–serine 573, glycine 580–serine 596, glycine 604–serine 622, glycine 629–serine 783, glycine 790–serine 843, and glycine 851–serine 905. Positions glycine 906–asparagine 1059 are enriched in low complexity. Positions serine 1062–aspartate 1078 are enriched in polar residues. A compositionally biased stretch (low complexity) spans proline 1094–alanine 1114. The helical transmembrane segment at isoleucine 1122–valine 1142 threads the bilayer. Isoleucine 1143 is a topological domain (cytoplasmic).

The protein localises to the membrane. This is an uncharacterized protein from Dictyostelium discoideum (Social amoeba).